The sequence spans 277 residues: MIEDIKTLREEHVYRAKLAEQAERYDEMAEAMKNLVENCLDQNNSPPGAKGDELTVEERNLLSVAYKNAVGARRASWRIISSVEQKEANRNHMANKALAASYRQKVENELNKICQEILTLLTDKLLPRTTDSESRVFYFKMKGDYYRYISEFSNEEGKKASAEQAEESYKRATDTAEAELPSTHPIRLGLALNYSVFYYEILNQPQKACEMAKLAFDDAITEFDSVSEDSYKDSTLIMQLLRDNLTLWTSDLQTQEQQQQPVGEGAEAPKVEATEQQ.

The disordered stretch occupies residues Leu-252–Gln-277. A compositionally biased stretch (basic and acidic residues) spans Glu-267–Gln-277.

This sequence belongs to the 14-3-3 family.

This chain is 14-3-3 protein, found in Eimeria tenella (Coccidian parasite).